The sequence spans 400 residues: CCA-adding enzyme (400 aa).

Residues Gly28 and Arg31 each coordinate ATP. Residues Gly28 and Arg31 each coordinate CTP. Mg(2+) is bound by residues Asp41 and Asp43. ATP contacts are provided by Arg112, Asp155, Arg158, Arg161, and Arg164. Residues Arg112, Asp155, Arg158, Arg161, and Arg164 each contribute to the CTP site.

The protein belongs to the tRNA nucleotidyltransferase/poly(A) polymerase family. Bacterial CCA-adding enzyme type 3 subfamily. In terms of assembly, homodimer. Mg(2+) serves as cofactor.

The catalysed reaction is a tRNA precursor + 2 CTP + ATP = a tRNA with a 3' CCA end + 3 diphosphate. The enzyme catalyses a tRNA with a 3' CCA end + 2 CTP + ATP = a tRNA with a 3' CCACCA end + 3 diphosphate. Catalyzes the addition and repair of the essential 3'-terminal CCA sequence in tRNAs without using a nucleic acid template. Adds these three nucleotides in the order of C, C, and A to the tRNA nucleotide-73, using CTP and ATP as substrates and producing inorganic pyrophosphate. tRNA 3'-terminal CCA addition is required both for tRNA processing and repair. Also involved in tRNA surveillance by mediating tandem CCA addition to generate a CCACCA at the 3' terminus of unstable tRNAs. While stable tRNAs receive only 3'-terminal CCA, unstable tRNAs are marked with CCACCA and rapidly degraded. The chain is CCA-adding enzyme from Staphylococcus epidermidis (strain ATCC 12228 / FDA PCI 1200).